The following is a 301-amino-acid chain: Phosphate butyryltransferase (301 aa).

The protein belongs to the phosphate acetyltransferase and butyryltransferase family.

It catalyses the reaction butanoyl-CoA + phosphate = butanoyl phosphate + CoA. It participates in lipid metabolism; butanoate metabolism. Its function is as follows. Catalyzes the conversion of butyryl-CoA through butyryl phosphate to butyrate. The protein is Phosphate butyryltransferase (ptb) of Clostridium acetobutylicum (strain ATCC 824 / DSM 792 / JCM 1419 / IAM 19013 / LMG 5710 / NBRC 13948 / NRRL B-527 / VKM B-1787 / 2291 / W).